The following is a 258-amino-acid chain: Alcohol dehydrogenase 2 (258 aa).

Residue 9-33 (IFVGGLGFIGYEACKQLMAKNMASF) coordinates NAD(+). Serine 137 is a binding site for substrate. Tyrosine 150 acts as the Proton acceptor in catalysis.

This sequence belongs to the short-chain dehydrogenases/reductases (SDR) family. In terms of assembly, homodimer.

It catalyses the reaction a primary alcohol + NAD(+) = an aldehyde + NADH + H(+). It carries out the reaction a secondary alcohol + NAD(+) = a ketone + NADH + H(+). The polypeptide is Alcohol dehydrogenase 2 (ADH2) (Ceratitis rosa (Natal fruit fly)).